The following is a 379-amino-acid chain: Dual-specificity RNA methyltransferase RlmN (379 aa).

The active-site Proton acceptor is glutamate 96. Positions 102-342 (TDDRGTLCVS…TRTTRGDDID (241 aa)) constitute a Radical SAM core domain. Cysteine 109 and cysteine 345 are disulfide-bonded. Cysteine 116, cysteine 120, and cysteine 123 together coordinate [4Fe-4S] cluster. S-adenosyl-L-methionine-binding positions include 170-171 (GE), serine 202, 224-226 (SLH), and asparagine 302. Residue cysteine 345 is the S-methylcysteine intermediate of the active site.

It belongs to the radical SAM superfamily. RlmN family. It depends on [4Fe-4S] cluster as a cofactor.

It localises to the cytoplasm. The catalysed reaction is adenosine(2503) in 23S rRNA + 2 reduced [2Fe-2S]-[ferredoxin] + 2 S-adenosyl-L-methionine = 2-methyladenosine(2503) in 23S rRNA + 5'-deoxyadenosine + L-methionine + 2 oxidized [2Fe-2S]-[ferredoxin] + S-adenosyl-L-homocysteine. The enzyme catalyses adenosine(37) in tRNA + 2 reduced [2Fe-2S]-[ferredoxin] + 2 S-adenosyl-L-methionine = 2-methyladenosine(37) in tRNA + 5'-deoxyadenosine + L-methionine + 2 oxidized [2Fe-2S]-[ferredoxin] + S-adenosyl-L-homocysteine. Its function is as follows. Specifically methylates position 2 of adenine 2503 in 23S rRNA and position 2 of adenine 37 in tRNAs. m2A2503 modification seems to play a crucial role in the proofreading step occurring at the peptidyl transferase center and thus would serve to optimize ribosomal fidelity. This Pseudomonas entomophila (strain L48) protein is Dual-specificity RNA methyltransferase RlmN.